A 326-amino-acid chain; its full sequence is uncharacterized protein (326 aa).

Solcar repeat units follow at residues 20–107, 120–219, and 231–322; these read QDSN…CKKK, LTNT…LREF, and KSNL…VCDS. 6 helical membrane passes run 24–40, 84–104, 126–143, 195–213, 237–254, and 297–316; these read IAFL…RTVV, GLNC…YEAC, LFSG…TYPL, VWPT…FAVY, LTIG…TYPF, and GLAA…WLVY.

The protein belongs to the mitochondrial carrier (TC 2.A.29) family.

The protein resides in the mitochondrion inner membrane. This is an uncharacterized protein from Saccharomyces cerevisiae (strain ATCC 204508 / S288c) (Baker's yeast).